The primary structure comprises 285 residues: N(G),N(G)-dimethylarginine dimethylaminohydrolase 1 (285 aa).

Residue Ala2 is modified to N-acetylalanine. Leu30 is a binding site for substrate. A Phosphoserine modification is found at Ser33. Residues Asp73, Glu78, Asp79, Arg98, and Arg145 each coordinate substrate. The active-site Proton donor is the His173. At Cys222 the chain carries S-nitrosocysteine. A substrate-binding site is contributed by Val268. Cys274 carries the post-translational modification S-nitrosocysteine. Cys274 acts as the Nucleophile in catalysis. A Zn(2+)-binding site is contributed by Cys274.

The protein belongs to the DDAH family. Monomer. Detected in red blood cells (at protein level). Widely distributed, high amounts found in kidney, brain, aorta and pancreas.

It catalyses the reaction N(omega),N(omega)-dimethyl-L-arginine + H2O = dimethylamine + L-citrulline. The enzyme catalyses N(omega)-methyl-L-arginine + H2O = L-citrulline + methylamine. Its activity is regulated as follows. Inhibited by zinc ions. In terms of biological role, hydrolyzes N(G),N(G)-dimethyl-L-arginine (ADMA) and N(G)-monomethyl-L-arginine (MMA) which act as inhibitors of NOS. Has therefore a role in the regulation of nitric oxide generation. The sequence is that of N(G),N(G)-dimethylarginine dimethylaminohydrolase 1 (Ddah1) from Rattus norvegicus (Rat).